The following is a 643-amino-acid chain: MERNTLSCFISDHEGFNGTIKNSPQDFVVIEIDTNGQFVNSVNTEEEERPCQTTKRIGKLKPSKPDDTDSLIQDCFDLNLILGLSVNRELEHFTNKLKVKPCSDDQEKVELSLGTFPDKHMRAVVHKAVRFNFPFLQTLTNQSEIRVREDPDFQELAGLASEGEAEDFFRFIDAKTPGSVFTFLPDDSKEHRTSVHHFVSRRFGKLVETKSFVDQQKTCITVRLRERGKQAKKRTMADCQMQEESLYTAFTLRKENLETLEAISYMAAVLGVLPSDFTYAGIKDKRAITYQAMVVKKISPERLLEKGSEFERRGMEISRVRPAFEALKLGRLQGNHFELVIRDLKHHGKHGLAELPKVIEEAVENVKNKGFVNYYGPQRFGSGSCVQADQVGLALLKENMEASVKLFFTPEDDDDLQNKAKRHFLHTGNAKESLVLMPAYKARERLMLRALHRYGSGQEGCTRGWLSLPHSMRVFYLHSYCSRVWNQAAKYRLQKLGFKPVQGDLVWAEPVKGLKDATEELSAPQIHVVTSDEEKNEVFSLDQVILPMPGNSVKYPENLLGQWYQDRLAQDGLESCRFRVTPLKLNVPGCYRPLLAKPQNITYSLQTSSSDESNTHCLSLNFDLEASCYATVCLGEIMKTNLS.

The active-site Nucleophile is the D284. One can recognise a TRUD domain in the interval 370–597 (GFVNYYGPQR…PGCYRPLLAK (228 aa)).

It belongs to the pseudouridine synthase TruD family.

The enzyme catalyses a uridine in mRNA = a pseudouridine in mRNA. In terms of biological role, pseudouridine synthase that catalyzes pseudouridylation of mRNAs. This Danio rerio (Zebrafish) protein is Pseudouridylate synthase PUS7L (pus7l).